The primary structure comprises 865 residues: Aconitate hydratase B (865 aa).

Residues Arg191, Ser244–Arg246, Gln414–Thr416, and Ser498 contribute to the substrate site. [4Fe-4S] cluster-binding residues include Cys710, Cys769, and Cys772. Arg791 and Arg796 together coordinate substrate.

The protein belongs to the aconitase/IPM isomerase family. Monomer. Requires [4Fe-4S] cluster as cofactor.

The enzyme catalyses citrate = D-threo-isocitrate. The catalysed reaction is (2S,3R)-3-hydroxybutane-1,2,3-tricarboxylate = 2-methyl-cis-aconitate + H2O. It functions in the pathway carbohydrate metabolism; tricarboxylic acid cycle; isocitrate from oxaloacetate: step 2/2. Its pathway is organic acid metabolism; propanoate degradation. Its function is as follows. Involved in the catabolism of short chain fatty acids (SCFA) via the tricarboxylic acid (TCA)(acetyl degradation route) and the 2-methylcitrate cycle I (propionate degradation route). Catalyzes the reversible isomerization of citrate to isocitrate via cis-aconitate. Also catalyzes the hydration of 2-methyl-cis-aconitate to yield (2R,3S)-2-methylisocitrate. The apo form of AcnB functions as a RNA-binding regulatory protein which regulates FliC synthesis via interaction with the ftsH transcript to decrease the intracellular levels of FtsH. The lower levels of FtsH protease activity then influence sigma-32, DnaK and ultimately FliC production. This chain is Aconitate hydratase B (acnB), found in Salmonella typhimurium (strain LT2 / SGSC1412 / ATCC 700720).